A 177-amino-acid chain; its full sequence is MSRVAKAPVAIPAGVEVKLNGQEITVKGAKGELTRVLNDAVVIAQEENNLTFGPKEGVANAWAQAGTARALVNNMVVGVTEGFTKKLTLKGVGYRAAIKGNAVGLTLGFSHPVEHELPAGIKAECPSQTEIVITGCDKQLVGQVAADIRSYRQPEPYKGKGVRYADENVRTKEAKKK.

Belongs to the universal ribosomal protein uL6 family. As to quaternary structure, part of the 50S ribosomal subunit.

This protein binds to the 23S rRNA, and is important in its secondary structure. It is located near the subunit interface in the base of the L7/L12 stalk, and near the tRNA binding site of the peptidyltransferase center. This Vibrio parahaemolyticus serotype O3:K6 (strain RIMD 2210633) protein is Large ribosomal subunit protein uL6.